The following is a 122-amino-acid chain: Large ribosomal subunit protein uL14c (122 aa).

It belongs to the universal ribosomal protein uL14 family. As to quaternary structure, part of the 50S ribosomal subunit.

Its subcellular location is the plastid. The protein resides in the chloroplast. Binds to 23S rRNA. This Welwitschia mirabilis (Tree tumbo) protein is Large ribosomal subunit protein uL14c.